Consider the following 242-residue polypeptide: Probable derlin-1 homolog (242 aa).

At methionine 1–methionine 18 the chain is on the cytoplasmic side. The helical transmembrane segment at phenylalanine 19–leucine 39 threads the bilayer. Residues tyrosine 40 to cysteine 98 are Lumenal-facing. Residues isoleucine 99–glycine 119 form a helical membrane-spanning segment. At threonine 120–asparagine 140 the chain is on the cytoplasmic side. A helical membrane pass occupies residues phenylalanine 141–phenylalanine 161. At leucine 162 to proline 167 the chain is on the lumenal side. Residues proline 168–tyrosine 188 traverse the membrane as a helical segment. Residues proline 189 to glycine 242 lie on the Cytoplasmic side of the membrane. A compositionally biased stretch (basic and acidic residues) spans asparagine 214 to threonine 224. Positions asparagine 214–glycine 242 are disordered. The segment covering tyrosine 233–glycine 242 has biased composition (gly residues).

The protein belongs to the derlin family.

It is found in the endoplasmic reticulum membrane. Its function is as follows. May be involved in the degradation process of specific misfolded endoplasmic reticulum (ER) luminal proteins. May also involved in endoplasmic reticulum stress-induced pre-emptive quality control, a mechanism that selectively attenuates the translocation of newly synthesized proteins into the endoplasmic reticulum and reroutes them to the cytosol for proteasomal degradation. This is Probable derlin-1 homolog from Dictyostelium discoideum (Social amoeba).